The primary structure comprises 931 residues: Valine--tRNA ligase (931 aa).

The short motif at 42-52 (PNVTGSLHMGH) is the 'HIGH' region element. The 'KMSKS' region signature appears at 523 to 527 (KMSKS). Lys-526 contributes to the ATP binding site. Residues 859-931 (MAGLIDKEAE…EEQLEKIKYL (73 aa)) adopt a coiled-coil conformation.

This sequence belongs to the class-I aminoacyl-tRNA synthetase family. ValS type 1 subfamily. In terms of assembly, monomer.

It localises to the cytoplasm. It catalyses the reaction tRNA(Val) + L-valine + ATP = L-valyl-tRNA(Val) + AMP + diphosphate. Catalyzes the attachment of valine to tRNA(Val). As ValRS can inadvertently accommodate and process structurally similar amino acids such as threonine, to avoid such errors, it has a 'posttransfer' editing activity that hydrolyzes mischarged Thr-tRNA(Val) in a tRNA-dependent manner. This Alcanivorax borkumensis (strain ATCC 700651 / DSM 11573 / NCIMB 13689 / SK2) protein is Valine--tRNA ligase.